A 534-amino-acid polypeptide reads, in one-letter code: (E)-beta-farnesene synthase (534 aa).

Residues Asp-287, Asp-291, Asn-431, Ser-435, and Glu-439 each coordinate Mg(2+). The DDXXD motif signature appears at 287 to 291 (DDMMD).

The protein belongs to the terpene synthase family. Mg(2+) serves as cofactor. It depends on Co(2+) as a cofactor. The cofactor is Mn(2+).

It is found in the cytoplasm. The catalysed reaction is (2E,6E)-farnesyl diphosphate = (E)-beta-farnesene + diphosphate. It participates in secondary metabolite biosynthesis; terpenoid biosynthesis. In terms of biological role, sesquiterpene cyclase catalyzing the production of beta-farnesene and alpha-bergamotene in equal amounts from farnesyl diphosphate. Involved in indirect defense by producing volatile signals attracting natural enemies of herbivores. In Zea mays subsp. mexicana (Mexican teosinte), this protein is (E)-beta-farnesene synthase.